A 255-amino-acid chain; its full sequence is Pimeloyl-[acyl-carrier protein] methyl ester esterase (255 aa).

Residues 16–241 (LVLLHGWGMN…QSSHAPFMTE (226 aa)) enclose the AB hydrolase-1 domain. Substrate is bound by residues Trp22, 82–83 (SL), and 143–147 (FMALQ). The Nucleophile role is filled by Ser82. Catalysis depends on residues Asp207 and His235. Residue His235 participates in substrate binding.

Belongs to the AB hydrolase superfamily. Carboxylesterase BioH family. In terms of assembly, monomer.

The protein resides in the cytoplasm. It carries out the reaction 6-carboxyhexanoyl-[ACP] methyl ester + H2O = 6-carboxyhexanoyl-[ACP] + methanol + H(+). The protein operates within cofactor biosynthesis; biotin biosynthesis. Its function is as follows. The physiological role of BioH is to remove the methyl group introduced by BioC when the pimeloyl moiety is complete. It allows to synthesize pimeloyl-ACP via the fatty acid synthetic pathway through the hydrolysis of the ester bonds of pimeloyl-ACP esters. This is Pimeloyl-[acyl-carrier protein] methyl ester esterase from Vibrio parahaemolyticus serotype O3:K6 (strain RIMD 2210633).